We begin with the raw amino-acid sequence, 92 residues long: Small ribosomal subunit protein uS19c (92 aa).

Belongs to the universal ribosomal protein uS19 family.

The protein resides in the plastid. The protein localises to the chloroplast. Protein S19 forms a complex with S13 that binds strongly to the 16S ribosomal RNA. The polypeptide is Small ribosomal subunit protein uS19c (rps19) (Pisum sativum (Garden pea)).